The following is a 558-amino-acid chain: Potassium-transporting ATPase potassium-binding subunit (558 aa).

Transmembrane regions (helical) follow at residues 1–21 (MEII…SGYL), 66–86 (FNGF…WLFL), 127–147 (MIVM…VCIA), 166–186 (IVRF…ILLM), 245–265 (IWSN…MLFL), 281–301 (ALIL…LTMW), 327–347 (FGAG…TGSV), 354–374 (LTPL…VFGG), 377–397 (VGLM…SLMV), 416–436 (IVLV…LAFM), 482–502 (ISTG…QLMI), and 531–551 (IVFI…LGPI).

Belongs to the KdpA family. As to quaternary structure, the system is composed of three essential subunits: KdpA, KdpB and KdpC.

It is found in the cell membrane. Its function is as follows. Part of the high-affinity ATP-driven potassium transport (or Kdp) system, which catalyzes the hydrolysis of ATP coupled with the electrogenic transport of potassium into the cytoplasm. This subunit binds the extracellular potassium ions and delivers the ions to the membrane domain of KdpB through an intramembrane tunnel. This chain is Potassium-transporting ATPase potassium-binding subunit, found in Staphylococcus aureus (strain MSSA476).